A 311-amino-acid chain; its full sequence is 4-diphosphocytidyl-2-C-methyl-D-erythritol kinase (311 aa).

Lys16 is an active-site residue. Position 100–110 (100–110) interacts with ATP; that stretch reads PIGAGLAGGSS. Asp142 is an active-site residue.

Belongs to the GHMP kinase family. IspE subfamily.

It carries out the reaction 4-CDP-2-C-methyl-D-erythritol + ATP = 4-CDP-2-C-methyl-D-erythritol 2-phosphate + ADP + H(+). It participates in isoprenoid biosynthesis; isopentenyl diphosphate biosynthesis via DXP pathway; isopentenyl diphosphate from 1-deoxy-D-xylulose 5-phosphate: step 3/6. Functionally, catalyzes the phosphorylation of the position 2 hydroxy group of 4-diphosphocytidyl-2C-methyl-D-erythritol. The chain is 4-diphosphocytidyl-2-C-methyl-D-erythritol kinase from Prochlorococcus marinus (strain AS9601).